Here is a 122-residue protein sequence, read N- to C-terminus: Crustacean hyperglycemic hormones 7 (122 aa).

The N-terminal stretch at 1-26 is a signal peptide; that stretch reads MSLAMTAFRMMAVALVVVVASSTTWA. Disulfide bonds link C55/C91, C71/C87, and C74/C100. V120 carries the valine amide modification.

It belongs to the arthropod CHH/MIH/GIH/VIH hormone family. Produced by the medulla terminalis X-organ in the eyestalks and transported to the sinus gland where they are stored and released.

The protein localises to the secreted. Hormone found in the sinus gland of isopods and decapods which controls the blood sugar level. Has a secretagogue action over the amylase released from the midgut gland. May act as a stress hormone and may be involved in the control of molting and reproduction. The protein is Crustacean hyperglycemic hormones 7 of Penaeus japonicus (Kuruma prawn).